Consider the following 724-residue polypeptide: Outer spore wall protein 2 (724 aa).

Disordered stretches follow at residues 407–427 (NSGQ…KNRV) and 477–497 (TSGG…YDDK).

The protein resides in the cytoplasm. The protein localises to the prospore membrane. Its function is as follows. May be involved in a late step of spore wall assembly. This Saccharomyces cerevisiae (strain ATCC 204508 / S288c) (Baker's yeast) protein is Outer spore wall protein 2 (OSW2).